A 201-amino-acid polypeptide reads, in one-letter code: Large ribosomal subunit protein uL4 (201 aa).

The tract at residues 46–71 (QKTRAEVVGSGKKPWRQKGTGRARAG) is disordered.

The protein belongs to the universal ribosomal protein uL4 family. As to quaternary structure, part of the 50S ribosomal subunit.

In terms of biological role, one of the primary rRNA binding proteins, this protein initially binds near the 5'-end of the 23S rRNA. It is important during the early stages of 50S assembly. It makes multiple contacts with different domains of the 23S rRNA in the assembled 50S subunit and ribosome. Functionally, forms part of the polypeptide exit tunnel. This is Large ribosomal subunit protein uL4 from Shewanella woodyi (strain ATCC 51908 / MS32).